Consider the following 129-residue polypeptide: Transcriptional activator protein (129 aa).

A Nuclear localization signal motif is present at residues 13–28 (KAQHRAAKRRAIRRRR). A zinc finger lies at 33–50 (CGCSIYIHIDCRNNGFTH). The tract at residues 73–118 (LFQDNQRRGSPLHQHQDIPLTNQVQPQPEESIGSPQGISQLPSMDD) is disordered. The segment covering 91-114 (PLTNQVQPQPEESIGSPQGISQLP) has biased composition (polar residues). Positions 115–129 (SMDDIDDSFWENLFK) are transactivation.

This sequence belongs to the geminiviridae transcriptional activator protein family. Monomer. Homodimer. Homooligomer. Self-interaction correlates with nuclear localization and efficient activation of transcription. Monomers suppress local silencing by interacting with and inactivating host adenosine kinase (ADK) in the cytoplasm. Interacts with and inhibits host SNF1 kinase. Binds to ssDNA. In terms of processing, phosphorylated.

The protein localises to the host nucleus. The protein resides in the host cytoplasm. Strong activator of the late viral genes promoters. Enhances the expression of the capsid protein and nuclear shuttle protein. Acts as a suppressor of RNA-mediated gene silencing, also known as post-transcriptional gene silencing (PTGS), a mechanism of plant viral defense that limits the accumulation of viral RNAs. Suppresses the host RNA silencing by inhibiting adenosine kinase (ADK), a kinase involved in a general methylation pathway. Also suppresses the host basal defense by interacting with and inhibiting SNF1 kinase, a key regulator of cell metabolism implicated in innate antiviral defense. Determines pathogenicity. This Tomato golden mosaic virus (strain Yellow vein) (TGMV) protein is Transcriptional activator protein.